A 230-amino-acid polypeptide reads, in one-letter code: Claudin-2 (230 aa).

The Cytoplasmic segment spans residues 1-7; sequence MASLGVQ. The chain crosses the membrane as a helical span at residues 8–28; sequence LVGYILGLLGLLGTSIAMLLP. Over 29 to 81 the chain is Extracellular; sequence NWRTSSYVGASIVTAVGFSKGLWMECATHSTGITQCDIYSTLLGLPADIQAAQ. Cysteines 54 and 64 form a disulfide. The chain crosses the membrane as a helical span at residues 82–102; sequence AMMVTSSAMSSLACIISVVGM. Topologically, residues 103-116 are cytoplasmic; it reads RCTVFCQDSRAKDR. The chain crosses the membrane as a helical span at residues 117 to 137; it reads VAVVGGVFFILGGILGFIPVA. The Extracellular segment spans residues 138–162; that stretch reads WNLHGILRDFYSPLVPDSMKFEIGE. The chain crosses the membrane as a helical span at residues 163-183; that stretch reads ALYLGIISALFSLVAGVILCF. At 184–230 the chain is on the cytoplasmic side; the sequence is SCSPQGNRTNYYDGYQAQPLATRSSPRSAQQPKAKSEFNSYSLTGYV. The disordered stretch occupies residues 205 to 230; it reads TRSSPRSAQQPKAKSEFNSYSLTGYV. A Glycyl lysine isopeptide (Lys-Gly) (interchain with G-Cter in SUMO) cross-link involves residue Lys218. Ser219 and Ser223 each carry phosphoserine. The tract at residues 229 to 230 is interactions with TJP1, TJP2 and TJP3; it reads YV.

It belongs to the claudin family. In terms of assembly, can form homo- and heteropolymers with other claudins to mediate paracellular barrier and channel functions of tight junctions in response to physiological stimuli. Homopolymers interact with CLDN3, but not CLDN1, homopolymers. Directly interacts with TJP1/ZO-1, TJP2/ZO-2 and TJP3/ZO-3. The disulfide bond is necessary for pore formation, but is not required for correct protein trafficking. As to expression, expressed in the kidney, liver and intestine, with higher levels in the ileum than in the jejunum. Low levels in the brain. Expressed in colonic epithelium (at protein level). Expressed in the perivenous regions, bile ducts, and gallbladder epithelium (at protein level).

It is found in the cell junction. It localises to the tight junction. The protein localises to the cell membrane. It carries out the reaction Na(+)(in) = Na(+)(out). The enzyme catalyses K(+)(in) = K(+)(out). It catalyses the reaction Rb(+)(in) = Rb(+)(out). The catalysed reaction is Li(+)(in) = Li(+)(out). It carries out the reaction Cs(+)(in) = Cs(+)(out). The enzyme catalyses Ca(2+)(in) = Ca(2+)(out). It catalyses the reaction methylamine(out) = methylamine(in). The catalysed reaction is choline(out) = choline(in). It carries out the reaction H2O(in) = H2O(out). Its activity is regulated as follows. The channel permeability is down-regulated at acidic pH. Functionally, forms paracellular channels: polymerizes in tight junction strands with cation- and water-selective channels through the strands, conveying epithelial permeability in a process known as paracellular tight junction permeability. In intestinal epithelium, allows for sodium and water fluxes from the peritoneal side to the lumen of the intestine to regulate nutrient absorption and clear enteric pathogens as part of mucosal immune response. In kidney, allows passive sodium and calcium reabsorption across proximal tubules from the lumen back to the bloodstream. In the hepatobiliary tract, allows paracellular water and cation fluxes in the hepatic perivenous areas and biliary epithelium to generate bile flow and maintain osmotic gradients. The sequence is that of Claudin-2 from Mus musculus (Mouse).